The sequence spans 102 residues: MYAIIETGGKQLKVQEGQEIYIEKLDANEGDTVTFDKVLFVGGETVKIGNPTVEGATVTAKVQKHGRQKKIIVFKYKAKKNYRRKQGHRQPYTKVVIEKINA.

Belongs to the bacterial ribosomal protein bL21 family. As to quaternary structure, part of the 50S ribosomal subunit. Contacts protein L20.

This protein binds to 23S rRNA in the presence of protein L20. The sequence is that of Large ribosomal subunit protein bL21 from Geobacillus thermodenitrificans (strain NG80-2).